A 1294-amino-acid chain; its full sequence is Voltage-gated inwardly rectifying potassium channel KCNH2 (1294 aa).

Topologically, residues 1–377 (RKFIIANARV…RIHRWTILHY (377 aa)) are cytoplasmic. The PAS domain maps to 15 to 44 (VIYCNDGFCELCGYSRAEVMQRPCTCDFLH). Residues 66–118 (RKVEIAFYRKDGSCFLCLVDVVPVKNEDGAVIMFILNFEVVMEKDMVGSPARD) enclose the PAC domain. A disordered region spans residues 207–258 (LVAPGSPPSSVPGPPHTSPRAHSLNPDASGSSCSLARTRSRESCASVRRASS). Over residues 211–223 (GSPPSSVPGPPHT) the composition is skewed to pro residues. Phosphoserine occurs at positions 212 and 216. Positions 232 to 243 (PDASGSSCSLAR) are enriched in polar residues. Phosphoserine is present on residues Ser257, Ser258, Ser294, and Ser325. A helical membrane pass occupies residues 378 to 398 (SPFKAVWDWLILLLVIYTAVF). Residues 399–424 (TPYSAAFLLKEPEEDAQTADCGYACQ) are Extracellular-facing. Residues 425 to 445 (PLAVVDLIVDIMFIVDILINF) traverse the membrane as a helical segment. Topologically, residues 446–469 (RTTYVNANEEVVSHPGRIAVHYFK) are cytoplasmic. The helical transmembrane segment at 470-490 (GWFLIDMVAAIPFDLLIFGSG) threads the bilayer. Topologically, residues 491 to 494 (SEEL) are extracellular. A helical; Voltage-sensor membrane pass occupies residues 495-515 (IGLLKTARLLRLVRVARKLDR). Residues 516 to 521 (YSEYGA) lie on the Cytoplasmic side of the membrane. A helical membrane pass occupies residues 522-542 (AVLFLLMCTFALIAHWLACIW). At 543-585 (YAIGNMEQPDMNSRIGWLHNLGDQIGKPYNSSGLGGPSIKDKY) the chain is on the extracellular side. Residues 586–606 (VTALYFTFSSLTSVGFGNVSP) constitute an intramembrane region (pore-forming). Residues 598–603 (SVGFGN) carry the Selectivity filter motif. At 607–612 (NTNSEK) the chain is on the extracellular side. Residues 613–633 (IFSICVMLIGSLMYASIFGNV) traverse the membrane as a helical segment. The Cytoplasmic portion of the chain corresponds to 634 to 1294 (SAIIQRLYSG…IAHWLACIWY (661 aa)). The tract at residues 716 to 816 (PFRGATKGCL…IHRDDLLEVL (101 aa)) is cNMP-binding domain. A disordered region spans residues 844-956 (GSPGSTELEG…LTEDGDKSDT (113 aa)). A phosphoserine mark is found at Ser845 and Ser848. Over residues 857–866 (RQRRRKLSFR) the composition is skewed to basic residues. Residues 902 to 913 (GDSPSSGPSSPE) are compositionally biased toward low complexity. Arg987 carries the post-translational modification Omega-N-methylarginine. Residues 1008-1035 (RGDVESRLDALQRQLNRLETRLSADMAT) adopt a coiled-coil conformation. At Ser1110 the chain carries Phosphoserine.

The protein belongs to the potassium channel family. H (Eag) (TC 1.A.1.20) subfamily. Kv11.1/KCNH2 sub-subfamily. In terms of assembly, the potassium channel is probably composed of a homo- or heterotetrameric complex of pore-forming alpha subunits that can associate with modulating beta subunits. Interacts with DNAJB12 and DNAJB14; chaperones DNAJB12 and DNAJB14 promote tetramerization. Heteromultimer with KCNH6/ERG2 and KCNH7/ERG3. Interacts with ALG10B. Forms a stable complex with KCNE1 or KCNE2, and that this heteromultimerization regulates Inward rectifier potassium channel activity. Interacts with CANX. The core-glycosylated, but not the fully glycosylated form interacts with RNF207. Interacts with NDFIP1 and NDFIP2; this interaction decreases the cell membrane expression by targeting KCNH2, through interaction with NEDD4L, for the degradation through the multivesicular bodies (MVBs)-lysosomal pathway. Phosphorylated on serine and threonine residues. Phosphorylation by PKA inhibits ion conduction. In terms of tissue distribution, highly expressed in heart and brain.

The protein localises to the cell membrane. The catalysed reaction is K(+)(in) = K(+)(out). Functionally, pore-forming (alpha) subunit of voltage-gated inwardly rectifying potassium channel. Characterized by unusual gating kinetics by producing relatively small outward currents during membrane depolarization and large inward currents during subsequent repolarization which reflect a rapid inactivation during depolarization and quick recovery from inactivation but slow deactivation (closing) during repolarization. Channel properties are modulated by cAMP and subunit assembly. Forms a stable complex with KCNE1 or KCNE2, and that this heteromultimerization regulates inward rectifier potassium channel activity. This Cavia porcellus (Guinea pig) protein is Voltage-gated inwardly rectifying potassium channel KCNH2.